The sequence spans 159 residues: Short coiled-coil protein (159 aa).

A coiled-coil region spans residues 78-146 (MMNADMDAVD…QYIENLMSAS (69 aa)).

Belongs to the SCOC family. As to quaternary structure, homodimer. Interacts with ARL1, ARL2 and ARL3. Directly interacts with FEZ1 and UVRAG. The interaction with UVRAG is reduced by amino acid starvation, but the complex is stabilized in the presence of FEZ1. Interacts with NRBF2. As to expression, widely expressed with highest levels in brain, heart and skeletal muscle.

Its subcellular location is the golgi apparatus membrane. It is found in the golgi apparatus. The protein resides in the trans-Golgi network. The protein localises to the cytoplasm. It localises to the cytosol. Positive regulator of amino acid starvation-induced autophagy. The sequence is that of Short coiled-coil protein (SCOC) from Homo sapiens (Human).